A 282-amino-acid polypeptide reads, in one-letter code: tRNA pseudouridine synthase B (282 aa).

The active-site Nucleophile is the aspartate 39.

The protein belongs to the pseudouridine synthase TruB family. Type 1 subfamily.

It catalyses the reaction uridine(55) in tRNA = pseudouridine(55) in tRNA. Responsible for synthesis of pseudouridine from uracil-55 in the psi GC loop of transfer RNAs. This is tRNA pseudouridine synthase B from Borrelia garinii subsp. bavariensis (strain ATCC BAA-2496 / DSM 23469 / PBi) (Borreliella bavariensis).